Here is a 245-residue protein sequence, read N- to C-terminus: Phosphoribosylaminoimidazole-succinocarboxamide synthase (245 aa).

It belongs to the SAICAR synthetase family.

The catalysed reaction is 5-amino-1-(5-phospho-D-ribosyl)imidazole-4-carboxylate + L-aspartate + ATP = (2S)-2-[5-amino-1-(5-phospho-beta-D-ribosyl)imidazole-4-carboxamido]succinate + ADP + phosphate + 2 H(+). Its pathway is purine metabolism; IMP biosynthesis via de novo pathway; 5-amino-1-(5-phospho-D-ribosyl)imidazole-4-carboxamide from 5-amino-1-(5-phospho-D-ribosyl)imidazole-4-carboxylate: step 1/2. The chain is Phosphoribosylaminoimidazole-succinocarboxamide synthase from Acaryochloris marina (strain MBIC 11017).